Reading from the N-terminus, the 409-residue chain is Arginine biosynthesis bifunctional protein ArgJ (409 aa).

Substrate contacts are provided by Thr165, Lys191, Thr202, Glu282, Asn404, and Thr409. Thr202 (nucleophile) is an active-site residue.

This sequence belongs to the ArgJ family. As to quaternary structure, heterotetramer of two alpha and two beta chains.

The protein resides in the cytoplasm. It carries out the reaction N(2)-acetyl-L-ornithine + L-glutamate = N-acetyl-L-glutamate + L-ornithine. It catalyses the reaction L-glutamate + acetyl-CoA = N-acetyl-L-glutamate + CoA + H(+). Its pathway is amino-acid biosynthesis; L-arginine biosynthesis; L-ornithine and N-acetyl-L-glutamate from L-glutamate and N(2)-acetyl-L-ornithine (cyclic): step 1/1. It participates in amino-acid biosynthesis; L-arginine biosynthesis; N(2)-acetyl-L-ornithine from L-glutamate: step 1/4. Catalyzes two activities which are involved in the cyclic version of arginine biosynthesis: the synthesis of N-acetylglutamate from glutamate and acetyl-CoA as the acetyl donor, and of ornithine by transacetylation between N(2)-acetylornithine and glutamate. In Parasynechococcus marenigrum (strain WH8102), this protein is Arginine biosynthesis bifunctional protein ArgJ.